The primary structure comprises 140 residues: Actin-depolymerizing factor 8 (140 aa).

Ser6 is modified (phosphoserine). In terms of domain architecture, ADF-H spans 7–139 (GMHVNDECKI…SLDIIKGRLN (133 aa)).

This sequence belongs to the actin-binding proteins ADF family. Expressed in the root trichoblast cells and developed root hairs.

It is found in the cytoplasm. The protein localises to the cytoskeleton. In terms of biological role, actin-depolymerizing protein. Severs actin filaments (F-actin) and binds to actin monomers. This chain is Actin-depolymerizing factor 8 (ADF8), found in Arabidopsis thaliana (Mouse-ear cress).